A 283-amino-acid chain; its full sequence is 2-dehydro-3-deoxyphosphooctonate aldolase (283 aa).

The protein belongs to the KdsA family.

The protein resides in the cytoplasm. It catalyses the reaction D-arabinose 5-phosphate + phosphoenolpyruvate + H2O = 3-deoxy-alpha-D-manno-2-octulosonate-8-phosphate + phosphate. It functions in the pathway carbohydrate biosynthesis; 3-deoxy-D-manno-octulosonate biosynthesis; 3-deoxy-D-manno-octulosonate from D-ribulose 5-phosphate: step 2/3. Its pathway is bacterial outer membrane biogenesis; lipopolysaccharide biosynthesis. This chain is 2-dehydro-3-deoxyphosphooctonate aldolase, found in Laribacter hongkongensis (strain HLHK9).